The following is a 412-amino-acid chain: L-cysteine:1D-myo-inositol 2-amino-2-deoxy-alpha-D-glucopyranoside ligase (412 aa).

Position 43 (cysteine 43) interacts with Zn(2+). L-cysteinyl-5'-AMP contacts are provided by residues 43–46 (CGIT), threonine 58, and 81–83 (NVT). The 'HIGH' region motif lies at 45–55 (ITPYDATHLGH). The 'ERGGDP' region signature appears at 187–192 (ERGGDP). Tryptophan 227 is an L-cysteinyl-5'-AMP binding site. Cysteine 231 contacts Zn(2+). Position 249 to 251 (249 to 251 (GSD)) interacts with L-cysteinyl-5'-AMP. A Zn(2+)-binding site is contributed by histidine 256. Isoleucine 283 contributes to the L-cysteinyl-5'-AMP binding site. The 'KMSKS' region motif lies at 289-293 (KMSKS).

Belongs to the class-I aminoacyl-tRNA synthetase family. MshC subfamily. As to quaternary structure, monomer. The cofactor is Zn(2+).

It catalyses the reaction 1D-myo-inositol 2-amino-2-deoxy-alpha-D-glucopyranoside + L-cysteine + ATP = 1D-myo-inositol 2-(L-cysteinylamino)-2-deoxy-alpha-D-glucopyranoside + AMP + diphosphate + H(+). Catalyzes the ATP-dependent condensation of GlcN-Ins and L-cysteine to form L-Cys-GlcN-Ins. The polypeptide is L-cysteine:1D-myo-inositol 2-amino-2-deoxy-alpha-D-glucopyranoside ligase (Saccharopolyspora erythraea (strain ATCC 11635 / DSM 40517 / JCM 4748 / NBRC 13426 / NCIMB 8594 / NRRL 2338)).